The chain runs to 395 residues: Altered inheritance of mitochondria protein 39, mitochondrial (395 aa).

Residues 161-181 traverse the membrane as a helical segment; it reads IFGGIFGVIIGYSLIYKVIYL.

This sequence belongs to the AIM39 family.

It is found in the mitochondrion membrane. The polypeptide is Altered inheritance of mitochondria protein 39, mitochondrial (AIM39) (Saccharomyces cerevisiae (strain YJM789) (Baker's yeast)).